The primary structure comprises 355 residues: 3-isopropylmalate dehydrogenase (355 aa).

Residues R90, R100, R128, and D222 each contribute to the substrate site. Residues D222, D246, and D250 each contribute to the Mg(2+) site. 280 to 292 (GSAPDIAGKGIAN) is an NAD(+) binding site.

The protein belongs to the isocitrate and isopropylmalate dehydrogenases family. LeuB type 1 subfamily. Homodimer. Mg(2+) serves as cofactor. It depends on Mn(2+) as a cofactor.

The protein localises to the cytoplasm. It catalyses the reaction (2R,3S)-3-isopropylmalate + NAD(+) = 4-methyl-2-oxopentanoate + CO2 + NADH. The protein operates within amino-acid biosynthesis; L-leucine biosynthesis; L-leucine from 3-methyl-2-oxobutanoate: step 3/4. Its function is as follows. Catalyzes the oxidation of 3-carboxy-2-hydroxy-4-methylpentanoate (3-isopropylmalate) to 3-carboxy-4-methyl-2-oxopentanoate. The product decarboxylates to 4-methyl-2 oxopentanoate. This chain is 3-isopropylmalate dehydrogenase, found in Burkholderia lata (strain ATCC 17760 / DSM 23089 / LMG 22485 / NCIMB 9086 / R18194 / 383).